The chain runs to 725 residues: MTDRHELILTCPKGLEGLLLEEATALGLEEGREQTSAVRGYGALEVGYRLCLWSRLANRVLLVISRFPTVDAETLYQGVHAVDWAEHLLPSGSLAVEFSGRGSGIDNTHFGALKVKDAIVDRLRSASGERPSIDKLDPDLRVHLRLDKGQAVLSLDLSGHSLHQRGYRLQQGAAPLKENLAAAILIRAGWPRIAAAGGALTDPMCGVGTFLVEGAMMAADIAPNLKRERWGFSAWLGHVPALWNRLHADAQARAEAGLARPPLWIRGYEADPRLIQPGRNNIERAGLSSWIRIYQGDVGSFEPRPDQNQKGLVICNPPYGERLGDEASLLYLYQNLGERLRQACLGWEAAVFTAAPDLGKRMGIRSHKQYAFWNGALPCKLLLIKVELDQFVTGQRAGSTEPQPQQAPVEQARLSEGGQMFANRLQKNLRQLGKWARREGIECYRLYDADMPEYALAVDLYRDWVHVQEYAPPRSIDPDKAQARLLDALAAIPQALGIAREKVVVKRRERQSGTRQYERQASQGEFLEVSEGGVKLLVNLTDYLDTGLFLDHRPLRLRIQREAAGKRFLNLFCYTATATVHAAKGGARSTTSVDLSRTYLDWARRNLSLNGFSDRQRLEQGDVMAWLEADRGEYDLIFIDPPTFSNSKRMEGVFDVQRDHVALLDLAMARLATGGTLYFSNNFRKFVLDASLMDRYAVEEITASTLDEDFRRNPRIHRAWKLQAR.

A THUMP domain is found at 46-157 (VGYRLCLWSR…KGQAVLSLDL (112 aa)).

Belongs to the methyltransferase superfamily. RlmKL family.

The protein resides in the cytoplasm. The enzyme catalyses guanosine(2445) in 23S rRNA + S-adenosyl-L-methionine = N(2)-methylguanosine(2445) in 23S rRNA + S-adenosyl-L-homocysteine + H(+). It carries out the reaction guanosine(2069) in 23S rRNA + S-adenosyl-L-methionine = N(2)-methylguanosine(2069) in 23S rRNA + S-adenosyl-L-homocysteine + H(+). In terms of biological role, specifically methylates the guanine in position 2445 (m2G2445) and the guanine in position 2069 (m7G2069) of 23S rRNA. The sequence is that of Ribosomal RNA large subunit methyltransferase K/L from Stutzerimonas stutzeri (strain A1501) (Pseudomonas stutzeri).